We begin with the raw amino-acid sequence, 774 residues long: 5-methyltetrahydropteroyltriglutamate--homocysteine methyltransferase (774 aa).

Residues R24–K27 and K120 each bind 5-methyltetrahydropteroyltri-L-glutamate. Residues I446–S448 and E499 each bind L-homocysteine. L-methionine-binding positions include I446–S448 and E499. W576 contacts 5-methyltetrahydropteroyltri-L-glutamate. Position 614 (D614) interacts with L-homocysteine. D614 lines the L-methionine pocket. E620 serves as a coordination point for 5-methyltetrahydropteroyltri-L-glutamate. Zn(2+) is bound by residues H656, C658, and E680. The active-site Proton donor is the H709. C741 provides a ligand contact to Zn(2+).

Belongs to the vitamin-B12 independent methionine synthase family. The cofactor is Zn(2+).

The enzyme catalyses 5-methyltetrahydropteroyltri-L-glutamate + L-homocysteine = tetrahydropteroyltri-L-glutamate + L-methionine. The protein operates within amino-acid biosynthesis; L-methionine biosynthesis via de novo pathway; L-methionine from L-homocysteine (MetE route): step 1/1. Catalyzes the transfer of a methyl group from 5-methyltetrahydrofolate to homocysteine resulting in methionine formation. The polypeptide is 5-methyltetrahydropteroyltriglutamate--homocysteine methyltransferase (Streptomyces griseus subsp. griseus (strain JCM 4626 / CBS 651.72 / NBRC 13350 / KCC S-0626 / ISP 5235)).